Consider the following 378-residue polypeptide: E3 ubiquitin-protein ligase ATL9 (378 aa).

A signal peptide spans 1-33; that stretch reads MAILDTKSSRWIPHNLLFLLLLLLLQSVPYGFG. The helical transmembrane segment at 51–71 threads the bilayer; it reads VVVVITVLFLVIFFMVFGSIF. The segment at 135–177 adopts an RING-type; atypical zinc-finger fold; that stretch reads CAVCLCEFEDDETLRLMPPCCHVFHADCVDVWLSEHSTCPLCR. Disordered stretches follow at residues 187–211, 300–326, and 350–378; these read DDDDSTESYSGTDPGTISSSTDPER, ARSSRSGYRSGSVGSERSAFPYGRKSN, and FSGDAPKNLPTSIEAGERSFERLRPDERV. Over residues 193-207 the composition is skewed to polar residues; the sequence is ESYSGTDPGTISSST. Low complexity predominate over residues 301-317; the sequence is RSSRSGYRSGSVGSERS. A compositionally biased stretch (basic and acidic residues) spans 364–378; the sequence is AGERSFERLRPDERV.

Belongs to the RING-type zinc finger family. ATL subfamily.

It is found in the membrane. It catalyses the reaction S-ubiquitinyl-[E2 ubiquitin-conjugating enzyme]-L-cysteine + [acceptor protein]-L-lysine = [E2 ubiquitin-conjugating enzyme]-L-cysteine + N(6)-ubiquitinyl-[acceptor protein]-L-lysine.. Its pathway is protein modification; protein ubiquitination. In terms of biological role, E3 ubiquitin-protein ligase able to catalyze polyubiquitination with ubiquitin-conjugating enzyme E2 UBC8 in vitro. May be involved in the early steps of the plant defense signaling pathway. The polypeptide is E3 ubiquitin-protein ligase ATL9 (ATL9) (Arabidopsis thaliana (Mouse-ear cress)).